The following is a 546-amino-acid chain: Sterol O-acyltransferase 1 (546 aa).

N-acetylmethionine is present on M1. A disordered region spans residues 1–37 (MVGEEKMSLRNRLSKSGENPEQDEAQRSVSDTQSNGR). The Cytoplasmic segment spans residues 1–134 (MVGEEKMSLR…LDELFEVDHI (134 aa)). S8 carries the post-translational modification Phosphoserine. The span at 27-37 (RSVSDTQSNGR) shows a compositional bias: polar residues. H133 serves as a coordination point for cholesterol. A helical transmembrane segment spans residues 135 to 156 (RTIYHMFIGLLILFILSTLVVD). Topologically, residues 157 to 176 (YIDEGRLVLEFNLLGYAFGK) are lumenal. A helical membrane pass occupies residues 177 to 202 (LPTVIWTWWAMFLSTLSIPYFLFQRW). The Cytoplasmic portion of the chain corresponds to 203 to 214 (AHGYSKTSHPLI). A helical membrane pass occupies residues 215 to 240 (YSLSHGFFFLVFQLGILGFVPTYVVL). Residues 241 to 248 (AYTLPPAS) are Lumenal-facing. Residues 249 to 272 (RFIVILEQIRMVMKAHSFVRENVP) traverse the membrane as a helical segment. The Cytoplasmic segment spans residues 273–315 (RVLNAAKEKSSTVPVPTVNQYLYFLFAPTLIYRDSYPRTPTVR). Residues 316–348 (WGYVAVQFLQVFGCLFYVYYIFERLCAPLFRNI) form a helical membrane-spanning segment. Residues 349–365 (KQEPFSARVLVLCVFNS) are Lumenal-facing. Residues 366-391 (ILPGVLMLFLTFFAFLHCWLNAFAEM) form a helical membrane-spanning segment. Topologically, residues 392–439 (LRFGDRMFYKDWWNSTSYSNYYRTWNVVVHDWLYYYAYKDLLWFFSKR) are cytoplasmic. The short motif at 399 to 405 (FYKDWWN) is the FYXDWWN motif element. 7 residues coordinate an acyl-CoA: N411, R414, N417, H421, Y429, K441, and S452. A helical transmembrane segment spans residues 440–464 (FKSAAMLAVFALSAVVHEYALAVCL). Residue H456 is part of the active site. The Lumenal portion of the chain corresponds to 465-470 (SYFYPV). A helical transmembrane segment spans residues 471-486 (LFVLFMFFGMAFNFIV). At 487 to 492 (NDSRKR) the chain is on the cytoplasmic side. Residues 493 to 524 (PIWNIMVWASLFLGHGVILCFYSQEWYARQHC) form a helical membrane-spanning segment. A disulfide bond links C524 and C542. The Lumenal segment spans residues 525–546 (PLKNPTFLDYVRPRSWTCQYVF).

The protein belongs to the membrane-bound acyltransferase family. Sterol o-acyltransferase subfamily. May form homo- or heterodimers. Interacts with UBIAD1.

It is found in the endoplasmic reticulum membrane. It carries out the reaction a sterol + a long-chain fatty acyl-CoA = a long-chain 3-hydroxysterol ester + CoA. The enzyme catalyses cholesterol + an acyl-CoA = a cholesterol ester + CoA. The catalysed reaction is cholesterol + (9Z)-octadecenoyl-CoA = cholesteryl (9Z-octadecenoate) + CoA. It catalyses the reaction cholesterol + hexadecanoyl-CoA = cholesteryl hexadecanoate + CoA. It carries out the reaction octadecanoyl-CoA + cholesterol = cholesteryl octadecanoate + CoA. The enzyme catalyses (9Z,12Z)-octadecadienoyl-CoA + cholesterol = cholesteryl (9Z,12Z)-octadecadienoate + CoA. The catalysed reaction is (5Z,8Z,11Z,14Z)-eicosatetraenoyl-CoA + cholesterol = cholesteryl (5Z,8Z,11Z,14Z)-eicosatetraenoate + CoA. It catalyses the reaction (9Z)-hexadecenoyl-CoA + cholesterol = cholesteryl (9Z)-hexadecenoate + CoA. It carries out the reaction (11Z)-octadecenoyl-CoA + cholesterol = cholesteryl (11Z)-octadecenoate + CoA. The enzyme catalyses (7Z)-octadecenoyl-CoA + cholesterol = cholesteryl (7Z)-octadecenoate + CoA. Catalyzes the formation of fatty acid-cholesterol esters, which are less soluble in membranes than cholesterol. Plays a role in lipoprotein assembly and dietary cholesterol absorption. Preferentially utilizes oleoyl-CoA ((9Z)-octadecenoyl-CoA) as a substrate: shows a higher activity towards an acyl-CoA substrate with a double bond at the delta-9 position (9Z) than towards saturated acyl-CoA or an unsaturated acyl-CoA with a double bond at the delta-7 (7Z) or delta-11 (11Z) positions. The protein is Sterol O-acyltransferase 1 (SOAT1) of Cricetulus griseus (Chinese hamster).